The chain runs to 274 residues: MKIHKLCFLALLLAHTTSAVNLNLNLKTSELVFLGDAELGPASDGVSRSGALSMTRDENPFSHGQSLWSTPVPFKPSSNSSSPYPFETSFTFSISTRIKPAPGHGLAFVVVPSIESDGPGPAGYLGIFNKTNNGNPKNHIFAVEFDVFQDKGFGDINDNHVGININSVTSVVAEKAGYWVQTGIGKMKHWSFKEFKLSNGERYKAWIEYRNSKVTVTLAPETVKKPKKPLIVAHLDLSKVFLQNMYPGFSGAMGRGVERHDIWSWTFQNSAKRI.

An N-terminal signal peptide occupies residues 1–19 (MKIHKLCFLALLLAHTTSA). Residues 28 to 268 (TSELVFLGDA…RHDIWSWTFQ (241 aa)) form a legume-lectin like region. The tract at residues 62–81 (SHGQSLWSTPVPFKPSSNSS) is disordered. Asn-129 is a glycosylation site (N-linked (GlcNAc...) asparagine). A Phosphoserine modification is found at Ser-238.

The protein belongs to the leguminous lectin family. Expressed in seedlings and leaves of adult plants.

The protein localises to the secreted. It localises to the extracellular space. The protein resides in the apoplast. Its subcellular location is the cell membrane. Functionally, plays a positive role in the effector-triggered immunity (ETI) response. Involved in salicylic acid (SA)-mediated processes occurring in ETI response, but is not involved in the autophagy process. Promotes systemic rather than local immunity. Essential for systemic acquired resistance (SAR), but not necessary for immune signaling downstream of SA. May act in parallel with SA. The polypeptide is Lectin-like protein (Arabidopsis thaliana (Mouse-ear cress)).